Consider the following 584-residue polypeptide: Cationic amino acid transporter 7, chloroplastic (584 aa).

The transit peptide at Met1–Arg49 directs the protein to the chloroplast. Helical transmembrane passes span Trp62 to Thr82, Ala90 to Phe110, Ile131 to Leu151, Gly185 to Cys205, Val214 to Phe234, Phe254 to Ile274, Ile293 to Ile313, Val346 to Gln366, Ala396 to Leu416, Leu417 to Phe437, Trp449 to Trp469, Phe480 to Val500, Phe508 to Leu528, and Phe540 to Tyr560.

This sequence belongs to the amino acid-polyamine-organocation (APC) superfamily. Cationic amino acid transporter (CAT) (TC 2.A.3.3) family.

The protein localises to the plastid. The protein resides in the chloroplast membrane. Functionally, permease involved in the transport of the cationic amino acids. The sequence is that of Cationic amino acid transporter 7, chloroplastic (CAT7) from Arabidopsis thaliana (Mouse-ear cress).